A 201-amino-acid polypeptide reads, in one-letter code: Recombination protein RecR (201 aa).

A C4-type zinc finger spans residues 57 to 72 (CKSCRTFTEEDECAIC). Positions 81 to 176 (GQLCVVEMPA…KVTRIAHGIP (96 aa)) constitute a Toprim domain.

It belongs to the RecR family.

Functionally, may play a role in DNA repair. It seems to be involved in an RecBC-independent recombinational process of DNA repair. It may act with RecF and RecO. The chain is Recombination protein RecR from Glaesserella parasuis serovar 5 (strain SH0165) (Haemophilus parasuis).